We begin with the raw amino-acid sequence, 290 residues long: MKTKHIIIVTGLSGAGKTTALNILEDMSYYTIDNLPLGLEKSLLDTEIEKLAVGIDIRTFKNTKDFFTFINYIKESGVKMDIIFIEAHEAIILGRYTLSRRAHPLKEVTLLRSILKEKKILFPIREIADLVIDTTEIKTVELEKRFKKFILAKDGENTDININIHIQSFGYKYGIPTDSDLMFDVRFIPNPYYIEKLKELNGFDEEVKEYVLSQKESKEFYFKLLPLLEFLIPQYIKEGKKHLTISIGCSGGQHRSVTFVNKLAEDLKNSKVLEYINVYVSHREKELGHW.

Residue 11–18 (GLSGAGKT) coordinates ATP. 56–59 (DIRT) contacts GTP.

It belongs to the RapZ-like family.

Its function is as follows. Displays ATPase and GTPase activities. The protein is Nucleotide-binding protein FN1089 of Fusobacterium nucleatum subsp. nucleatum (strain ATCC 25586 / DSM 15643 / BCRC 10681 / CIP 101130 / JCM 8532 / KCTC 2640 / LMG 13131 / VPI 4355).